Here is a 399-residue protein sequence, read N- to C-terminus: C-type lectin domain family 4 member M (399 aa).

At 1 to 49 (MSDSKEQRVQPLGLLEEDPTTSGIRLFPRDFQFQQTHGHKSSTGCLGHG) the chain is on the cytoplasmic side. Residues 14 to 15 (LL) carry the Endocytosis signal motif. A helical; Signal-anchor for type II membrane protein membrane pass occupies residues 50-70 (PLVLQLLSFTLLAGFLVAILV). Residues 71 to 399 (QVYKGPSSLS…KKPTACFRDE (329 aa)) lie on the Extracellular side of the membrane. A glycan (N-linked (GlcNAc...) asparagine) is linked at asparagine 92. 7 tandem repeats follow at residues 108–130 (KLQE…PEKS), 131–153 (RLQE…PENS), 154–176 (RLQE…PEKS), 177–199 (KQQE…PEKS), 200–222 (KQQE…PEKS), 223–245 (KQQE…PDQS), and 246–268 (KQQQ…CCRC). The tract at residues 108 to 269 (KLQEIYQELT…AFERLCCRCP (162 aa)) is 7 X approximate tandem repeats. Disulfide bonds link cysteine 265–cysteine 395, cysteine 268–cysteine 279, cysteine 296–cysteine 389, and cysteine 368–cysteine 381. One can recognise a C-type lectin domain in the interval 274–390 (FFQGNCYFIS…CNVDNYWICK (117 aa)). Residues glutamate 359, asparagine 361, serine 363, glutamate 366, asparagine 377, and aspartate 378 each coordinate Ca(2+). Asparagine 361 carries N-linked (GlcNAc...) asparagine glycosylation.

As to quaternary structure, homotetramer.

The protein localises to the membrane. In terms of biological role, probable pathogen-recognition receptor involved in peripheral immune surveillance in liver. May mediate the endocytosis of pathogens which are subsequently degraded in lysosomal compartments. Probably recognizes in a calcium-dependent manner high mannose N-linked oligosaccharides in a variety of pathogen antigens. Is a receptor for ICAM3, probably by binding to mannose-like carbohydrates. This is C-type lectin domain family 4 member M (CLEC4M) from Nomascus concolor (Black crested gibbon).